We begin with the raw amino-acid sequence, 371 residues long: MSRPLRPTSSSPWDCSGGVFDWDVALRKLDELNARVEDPTLWDRPSEAQAVSRERANLAAKVEAVQSIERDLKDALEYAELAEMESDEDSLNDARAQLKSLKERAGRAELEALLSGEADGNDCYVEINSGAGGTESCDWAGILLRMYTRWANAHGMTTELIEETDGDQAGIKSATLLVKGANAYGWLKTEAGVHRLVRISPYDSSARRHTSFASAWVYPVVDDNIEIEINPSDVRTDTYRASGAGGQHINKTDSAVRLTHIPTGIAVACQAGRSQHQNREEAWKMLRARLYEAELQKREAAQQALEDQKTDIGWGHQIRSYVLQPYQMVKDLRTNVETSDTQGVLDGDLDAFMAASLAQRVGHTRDGGEAS.

Gln-247 bears the N5-methylglutamine mark.

It belongs to the prokaryotic/mitochondrial release factor family. In terms of processing, methylated by PrmC. Methylation increases the termination efficiency of RF2.

It is found in the cytoplasm. Functionally, peptide chain release factor 2 directs the termination of translation in response to the peptide chain termination codons UGA and UAA. This is Peptide chain release factor 2 from Caulobacter vibrioides (strain ATCC 19089 / CIP 103742 / CB 15) (Caulobacter crescentus).